Consider the following 163-residue polypeptide: HTH-type transcriptional regulator IscR (163 aa).

One can recognise an HTH rrf2-type domain in the interval 2–131; the sequence is RLTSKGRYAV…NNITLGELVN (130 aa). The H-T-H motif DNA-binding region spans 28 to 51; it reads LADISERQGISLSYLEQLFSRLRK. Cys92, Cys98, and Cys104 together coordinate [2Fe-2S] cluster.

The cofactor is [2Fe-2S] cluster.

In terms of biological role, regulates the transcription of several operons and genes involved in the biogenesis of Fe-S clusters and Fe-S-containing proteins. The chain is HTH-type transcriptional regulator IscR from Klebsiella pneumoniae (strain 342).